We begin with the raw amino-acid sequence, 689 residues long: Glycine--tRNA ligase beta subunit (689 aa).

Belongs to the class-II aminoacyl-tRNA synthetase family. Tetramer of two alpha and two beta subunits.

It is found in the cytoplasm. The catalysed reaction is tRNA(Gly) + glycine + ATP = glycyl-tRNA(Gly) + AMP + diphosphate. This Salmonella arizonae (strain ATCC BAA-731 / CDC346-86 / RSK2980) protein is Glycine--tRNA ligase beta subunit.